The following is a 325-amino-acid chain: N-acetyl-gamma-glutamyl-phosphate reductase (325 aa).

Cys-135 is a catalytic residue.

This sequence belongs to the NAGSA dehydrogenase family. Type 1 subfamily.

The protein localises to the cytoplasm. It catalyses the reaction N-acetyl-L-glutamate 5-semialdehyde + phosphate + NADP(+) = N-acetyl-L-glutamyl 5-phosphate + NADPH + H(+). It participates in amino-acid biosynthesis; L-arginine biosynthesis; N(2)-acetyl-L-ornithine from L-glutamate: step 3/4. Functionally, catalyzes the NADPH-dependent reduction of N-acetyl-5-glutamyl phosphate to yield N-acetyl-L-glutamate 5-semialdehyde. This is N-acetyl-gamma-glutamyl-phosphate reductase from Flavobacterium johnsoniae (strain ATCC 17061 / DSM 2064 / JCM 8514 / BCRC 14874 / CCUG 350202 / NBRC 14942 / NCIMB 11054 / UW101) (Cytophaga johnsonae).